Reading from the N-terminus, the 559-residue chain is Formate--tetrahydrofolate ligase (559 aa).

An ATP-binding site is contributed by 68 to 75 (TPAGEGKT).

Belongs to the formate--tetrahydrofolate ligase family.

It catalyses the reaction (6S)-5,6,7,8-tetrahydrofolate + formate + ATP = (6R)-10-formyltetrahydrofolate + ADP + phosphate. It participates in one-carbon metabolism; tetrahydrofolate interconversion. The protein is Formate--tetrahydrofolate ligase of Rhizobium rhizogenes (strain K84 / ATCC BAA-868) (Agrobacterium radiobacter).